The chain runs to 396 residues: Phosphoglycerate kinase (396 aa).

Substrate is bound by residues 23-25 (DFN), Arg38, 61-64 (HMGK), Arg122, and Arg155. ATP-binding positions include Lys206, Gly296, Glu327, and 353–356 (GGDS).

Belongs to the phosphoglycerate kinase family. In terms of assembly, monomer.

It localises to the cytoplasm. It carries out the reaction (2R)-3-phosphoglycerate + ATP = (2R)-3-phospho-glyceroyl phosphate + ADP. It participates in carbohydrate degradation; glycolysis; pyruvate from D-glyceraldehyde 3-phosphate: step 2/5. The polypeptide is Phosphoglycerate kinase (Clostridium botulinum (strain Eklund 17B / Type B)).